A 192-amino-acid chain; its full sequence is UPF0301 protein Bcep1808_0798 (192 aa).

Belongs to the UPF0301 (AlgH) family.

The protein is UPF0301 protein Bcep1808_0798 of Burkholderia vietnamiensis (strain G4 / LMG 22486) (Burkholderia cepacia (strain R1808)).